Here is a 530-residue protein sequence, read N- to C-terminus: Apolipoprotein N-acyltransferase (530 aa).

Helical transmembrane passes span 19–39 (LIAG…PGLL), 65–85 (WLAG…AFLV), 96–116 (FAVT…ALLY), 128–148 (LTFA…LTGF), 169–189 (LVGA…PAVW), and 197–217 (AATG…AIAL). Residues 232–485 (VQADIKQDLK…SGVIDAQIPG (254 aa)) form the CN hydrolase domain. The Proton acceptor role is filled by Glu-274. Lys-343 is an active-site residue. Catalysis depends on Cys-396, which acts as the Nucleophile.

This sequence belongs to the CN hydrolase family. Apolipoprotein N-acyltransferase subfamily.

Its subcellular location is the cell inner membrane. It catalyses the reaction N-terminal S-1,2-diacyl-sn-glyceryl-L-cysteinyl-[lipoprotein] + a glycerophospholipid = N-acyl-S-1,2-diacyl-sn-glyceryl-L-cysteinyl-[lipoprotein] + a 2-acyl-sn-glycero-3-phospholipid + H(+). It functions in the pathway protein modification; lipoprotein biosynthesis (N-acyl transfer). Its function is as follows. Catalyzes the phospholipid dependent N-acylation of the N-terminal cysteine of apolipoprotein, the last step in lipoprotein maturation. In Caulobacter vibrioides (strain ATCC 19089 / CIP 103742 / CB 15) (Caulobacter crescentus), this protein is Apolipoprotein N-acyltransferase.